Here is a 384-residue protein sequence, read N- to C-terminus: S-adenosylmethionine synthase (384 aa).

An ATP-binding site is contributed by H15. D17 is a binding site for Mg(2+). E43 serves as a coordination point for K(+). E56 and Q99 together coordinate L-methionine. Positions 99-109 are flexible loop; sequence QSPDINQGVDR. Residues 164 to 166, 231 to 232, D240, 246 to 247, A263, and K267 each bind ATP; these read DAK, RF, and RK. D240 is a binding site for L-methionine. K271 is an L-methionine binding site.

The protein belongs to the AdoMet synthase family. Homotetramer; dimer of dimers. Requires Mg(2+) as cofactor. It depends on K(+) as a cofactor.

It localises to the cytoplasm. It catalyses the reaction L-methionine + ATP + H2O = S-adenosyl-L-methionine + phosphate + diphosphate. It participates in amino-acid biosynthesis; S-adenosyl-L-methionine biosynthesis; S-adenosyl-L-methionine from L-methionine: step 1/1. Functionally, catalyzes the formation of S-adenosylmethionine (AdoMet) from methionine and ATP. The overall synthetic reaction is composed of two sequential steps, AdoMet formation and the subsequent tripolyphosphate hydrolysis which occurs prior to release of AdoMet from the enzyme. The chain is S-adenosylmethionine synthase from Shewanella woodyi (strain ATCC 51908 / MS32).